The sequence spans 359 residues: MALNSSADDGIKRIQDDCPKAGRHSYIFVMIPTLYSIIFVVGIFGNSLVVIVIYFYMKLKTVASVFLLNLALADLCFLLTLPVWAVYTAMEYRWPFGNHLCKIASAGISFNLYASVFLLTCLSIDRYLAIVHPMKSRLRRTMLVAKVTCVVIWLLAGLASLPAVIHRNVYFIENTNSTVCAFHYESQNSTLPVGLGLTKNILGFMFPFLIILTSYTLIWKALKKAYEIQKNKPRNDDIFRIIMAIVLFFFFSWIPHQIFTFLDVLIQLGVIRDCKIADVVDTAMPITICIAYFNNCLNPLFYGFLGKKFKKYFLQLLKYIPPKAKSHSSLSTKMSTLSYRPSDNMNSSAKKPASCFEVE.

Residues 1-25 lie on the Extracellular side of the membrane; sequence MALNSSADDGIKRIQDDCPKAGRHS. N4 is a glycosylation site (N-linked (GlcNAc...) asparagine). Residues Q15 and D17 each coordinate angiotensin II. 2 disulfide bridges follow: C18-C274 and C101-C180. Residues 26–55 traverse the membrane as a helical segment; the sequence is YIFVMIPTLYSIIFVVGIFGNSLVVIVIYF. The Cytoplasmic segment spans residues 56–61; it reads YMKLKT. Residues 62-89 traverse the membrane as a helical segment; sequence VASVFLLNLALADLCFLLTLPVWAVYTA. Topologically, residues 90-98 are extracellular; it reads MEYRWPFGN. The helical transmembrane segment at 99 to 125 threads the bilayer; the sequence is HLCKIASAGISFNLYASVFLLTCLSID. Topologically, residues 126-141 are cytoplasmic; the sequence is RYLAIVHPMKSRLRRT. The chain crosses the membrane as a helical span at residues 142–165; it reads MLVAKVTCVVIWLLAGLASLPAVI. Over 166 to 190 the chain is Extracellular; that stretch reads HRNVYFIENTNSTVCAFHYESQNST. R167 is a binding site for angiotensin II. N176 is a glycosylation site (N-linked (GlcNAc...) asparagine). F182, H183, and Y184 together coordinate angiotensin II. Residue N188 is glycosylated (N-linked (GlcNAc...) asparagine). The helical transmembrane segment at 191-216 threads the bilayer; that stretch reads LPVGLGLTKNILGFMFPFLIILTSYT. Residue K199 coordinates angiotensin II. Topologically, residues 217 to 239 are cytoplasmic; sequence LIWKALKKAYEIQKNKPRNDDIF. The chain crosses the membrane as a helical span at residues 240–268; the sequence is RIIMAIVLFFFFSWIPHQIFTFLDVLIQL. The Extracellular portion of the chain corresponds to 269 to 278; that stretch reads GVIRDCKIAD. Residues 279–304 traverse the membrane as a helical segment; that stretch reads VVDTAMPITICIAYFNNCLNPLFYGF. The Cytoplasmic segment spans residues 305-359; sequence LGKKFKKYFLQLLKYIPPKAKSHSSLSTKMSTLSYRPSDNMNSSAKKPASCFEVE. C355 is lipidated: S-palmitoyl cysteine.

It belongs to the G-protein coupled receptor 1 family. Interacts with MAS1. Interacts with ARRB1. Interacts with FLNA (via filamin repeat 21); increases PKA-mediated phosphorylation of FLNA. Post-translationally, C-terminal Ser or Thr residues may be phosphorylated.

The protein resides in the cell membrane. In terms of biological role, receptor for angiotensin II, a vasoconstricting peptide, which acts as a key regulator of blood pressure and sodium retention by the kidney. The activated receptor in turn couples to G-alpha proteins G(q) (GNAQ, GNA11, GNA14 or GNA15) and thus activates phospholipase C and increases the cytosolic Ca(2+) concentrations, which in turn triggers cellular responses such as stimulation of protein kinase C. This Meriones unguiculatus (Mongolian jird) protein is Type-1 angiotensin II receptor (AGTR1).